The sequence spans 1066 residues: E3 ubiquitin-protein ligase PDZRN3 (1066 aa).

The segment at C18–C56 adopts an RING-type; degenerate zinc-finger fold. A TRAF-type zinc finger spans residues E100 to G158. 2 PDZ domains span residues T249 to T339 and E419 to P503. Residue S427 is modified to Phosphoserine. The disordered stretch occupies residues Q545–Q603. A compositionally biased stretch (polar residues) spans T554–N563. Over residues Q564 to E582 the composition is skewed to basic and acidic residues. Over residues T594–Q603 the composition is skewed to polar residues. A coiled-coil region spans residues E679–R704. Over residues T744 to S754 the composition is skewed to basic and acidic residues. Disordered regions lie at residues T744–S778 and L808–Y863. Polar residues-rich tracts occupy residues S755–L769 and G845–L855. Residues K975–M1025 adopt a coiled-coil conformation.

As to quaternary structure, interacts with NLGN1 and EFNB2. Interacts with UBE2D2 and with MUSK via the first PDZ domain. Post-translationally, auto-ubiquitinated. As to expression, widely expressed, including in the heart, skeletal muscle and liver and, at lower levels, in the brain, colon, small intestine, placenta and lung. Down-regulated in ovarian serous papillary tumors.

The protein resides in the synapse. The protein localises to the cytoplasm. The enzyme catalyses S-ubiquitinyl-[E2 ubiquitin-conjugating enzyme]-L-cysteine + [acceptor protein]-L-lysine = [E2 ubiquitin-conjugating enzyme]-L-cysteine + N(6)-ubiquitinyl-[acceptor protein]-L-lysine.. It functions in the pathway protein modification; protein ubiquitination. E3 ubiquitin-protein ligase. Plays an important role in regulating the surface level of MUSK on myotubes. Mediates the ubiquitination of MUSK, promoting its endocytosis and lysosomal degradation. Might contribute to terminal myogenic differentiation. This is E3 ubiquitin-protein ligase PDZRN3 (PDZRN3) from Homo sapiens (Human).